The sequence spans 161 residues: Pupal cuticle protein C1B (161 aa).

Tandem repeats lie at residues 6-9 (AAPA), 14-17 (AAPA), 35-38 (AAPA), 87-90 (AAPV), 103-106 (AAPV), 112-115 (AAPV), 121-124 (AAPV), 130-133 (AAPV), and 143-146 (AAPA).

Functionally, component of the cuticle of the pupa of Tenebrio molitor. In Tenebrio molitor (Yellow mealworm beetle), this protein is Pupal cuticle protein C1B.